A 341-amino-acid chain; its full sequence is D-aspartate oxidase (341 aa).

7 residues coordinate FAD: Asp-36, Lys-37, Thr-43, Ser-44, Met-50, Gly-307, and Ile-311. The Microbody targeting signal motif lies at 339–341 (SKL).

This sequence belongs to the DAMOX/DASOX family. As to quaternary structure, homotetramer. Interacts with PEX5; the interaction is direct and required for localization of DDO to the peroxisome. It depends on FAD as a cofactor. As to expression, expressed in epithelial cells of the renal proximal tubules (not detected in the glomeruli or renal distal tubules), liver, right atrium of heart, lung, chief cells of the gastric mucosa, choroid plexus, pia mater, brain stem, midbrain, pons, medulla oblongata, hypothalamus, hippocampus, cerebral cortex, cerebellum, ependyma, olfactory bulb and the pituitary, pineal, thyroid and adrenal glands (at protein level).

The protein localises to the peroxisome matrix. It is found in the cytoplasm. The protein resides in the cytosol. The enzyme catalyses D-aspartate + O2 + H2O = oxaloacetate + H2O2 + NH4(+). It catalyses the reaction D-glutamate + O2 + H2O = H2O2 + 2-oxoglutarate + NH4(+). Functionally, selectively catalyzes the oxidative deamination of acidic amino acids. Suppresses the level of D-aspartate in the brain, an amino acid that can act as an agonist for glutamate receptors. Protects the organism from the toxicity of D-amino acids. May also function in the intestine. The sequence is that of D-aspartate oxidase (DDO) from Sus scrofa (Pig).